Consider the following 546-residue polypeptide: Glutathione reductase (546 aa).

Residues 2–46 (YKHRYFHFFFFFFFFLVSTKIIRSFTFLNNNTNLSNPVYFKKKAN) constitute an apicoplast transit peptide. FAD contacts are provided by Ser-58 and Gly-59. Ser-58 lines the glutathione pocket. Arg-65 is a binding site for glutathione. FAD-binding residues include Glu-78, Thr-85, Cys-86, and Lys-94. Residues Cys-86 and Cys-91 are joined by a disulfide bond. Tyr-141 is a binding site for glutathione. Ala-157 serves as a coordination point for FAD. Positions 233, 236, 253, 259, and 318 each coordinate NADP(+). Asp-358 and Thr-400 together coordinate FAD. Residue Arg-408 participates in glutathione binding. Val-430 contributes to the NADP(+) binding site. His-531 contacts FAD. His-531 (proton acceptor) is an active-site residue.

Belongs to the class-I pyridine nucleotide-disulfide oxidoreductase family. As to quaternary structure, homodimer. It depends on FAD as a cofactor.

The protein localises to the cytoplasm. It localises to the plastid. Its subcellular location is the apicoplast. It catalyses the reaction 2 glutathione + NADP(+) = glutathione disulfide + NADPH + H(+). Functionally, catalyzes the reduction of glutathione disulfide (GSSG) to reduced glutathione (GSH). Constitutes the major mechanism to maintain a high GSH:GSSG ratio in the cytosol. The sequence is that of Glutathione reductase from Plasmodium falciparum (isolate 3D7).